The sequence spans 127 residues: Calcitonin receptor-stimulating peptide 1 (127 aa).

A signal peptide spans 1-25 (MGFWKFSPFLVLGILALYQVGFLQA). Residues 26–79 (APFRSALENPPDSGVRNEEELRLLLAAVMKDYMQMKTHELEQEQETEGSRVAVQ) constitute a propeptide that is removed on maturation. A disulfide bridge connects residues cysteine 83 and cysteine 88.

Belongs to the calcitonin family.

It is found in the secreted. Functionally, stimulates cAMP production in porcine kidney cell line LLC-PK1 via the calcitonin receptor (CT) but not via the CT-like (CL) receptor. The polypeptide is Calcitonin receptor-stimulating peptide 1 (CRSP1) (Canis lupus familiaris (Dog)).